The chain runs to 479 residues: Dynein regulatory complex subunit 4 (479 aa).

Coiled-coil stretches lie at residues Arg-28–Ile-93, Arg-117–Lys-170, and Glu-210–Glu-347.

It belongs to the DRC4 family.

The protein resides in the cytoplasm. It localises to the cytoskeleton. The protein localises to the flagellum basal body. Cytoskeletal linker which probably functions in axonemal and non-axonemal dynein regulation. May play a role in the spermatozoa motility. The protein is Dynein regulatory complex subunit 4 of Drosophila melanogaster (Fruit fly).